A 113-amino-acid polypeptide reads, in one-letter code: uncharacterized protein (113 aa).

A helical transmembrane segment spans residues 4–26 (VLFKIAVALLYLLSFFLHRLHLR). The interval 32 to 74 (RRRRRRHHRRHHRRHHHHRRRRRRRRRRRRRHHRHHHHRHRRR) is disordered.

It is found in the membrane. This is an uncharacterized protein from Saccharomyces cerevisiae (strain ATCC 204508 / S288c) (Baker's yeast).